The chain runs to 189 residues: GTPase KRas (189 aa).

Met-1 is modified (N-acetylmethionine; in GTPase KRas; alternate). Thr-2 is subject to N-acetylthreonine; in GTPase KRas, N-terminally processed. GTP is bound by residues 10–18 (GAGGVGKSA), 29–35 (VDEYDPT), and 59–60 (AG). The Effector region motif lies at 32–40 (YDPTIEDSY). A (Microbial infection) O-linked (Glc) threonine; by P.sordellii toxin TcsL glycan is attached at Thr-35. Lys-104 bears the N6-acetyllysine mark. GTP is bound at residue 116–119 (NKCD). Residues 166–185 (YRLKKISKEEKTPGCVKIKK) form a hypervariable region region. Lys-170 is covalently cross-linked (Glycyl lysine isopeptide (Lys-Gly) (interchain with G-Cter in ubiquitin)). A lipid anchor (S-palmitoyl cysteine) is attached at Cys-180. 3 N6-palmitoyl lysine lipidation sites follow: Lys-182, Lys-184, and Lys-185. Cysteine methyl ester is present on Cys-186. Cys-186 is lipidated: S-farnesyl cysteine. Positions 187–189 (IIM) are cleaved as a propeptide — removed in mature form.

It belongs to the small GTPase superfamily. Ras family. In terms of assembly, interacts with PHLPP. Interacts (active GTP-bound form preferentially) with RGS14. Interacts (when farnesylated) with PDE6D; this promotes dissociation from the cell membrane. Interacts with SOS1. Interacts (when farnesylated) with GPR31. Interacts with RAP1GDS1. Interacts (active GTP-bound form) with both SHOC2 and PP1c (all isoforms) to form a tertiary complex; SHOC2 and PP1c preferably bind M-Ras/MRAS, but they also bind K-Ras/KRAS, N-Ras/NRAS and H-Ras/HRAS. Interacts (GTP-bound form) with MAPKAP1/SIN1; inhibiting K-Ras/KRAS activity. Interacts with GPR31; in a farnelysation-dependent manner. Post-translationally, acetylation at Lys-104 prevents interaction with guanine nucleotide exchange factors (GEFs). In terms of processing, palmitoylated at Lys-182, Lys-184 and Lys-185. Palmitoylation on lysine residues is promoted by palmitoylation at Cys-180. Lysine-depalmitoylation by SIRT2 promotes its localization to endomembranes in endocytic pathways. Ubiquitinated by the BCR(LZTR1) E3 ubiquitin ligase complex at Lys-170 in a non-degradative manner, leading to inhibit Ras signaling by decreasing Ras association with membranes. Post-translationally, (Microbial infection) Glucosylated at Thr-35 by P.sordellii toxin TcsL.

It localises to the cell membrane. The protein resides in the endomembrane system. Its subcellular location is the cytoplasm. It is found in the cytosol. It catalyses the reaction GTP + H2O = GDP + phosphate + H(+). Its activity is regulated as follows. Alternates between an inactive form bound to GDP and an active form bound to GTP. Activated by a guanine nucleotide-exchange factor (GEF) and inactivated by a GTPase-activating protein (GAP). Interaction with SOS1 promotes exchange of bound GDP to GTP. Ras proteins bind GDP/GTP and possess intrinsic GTPase activity. Plays an important role in the regulation of cell proliferation. Plays a role in promoting oncogenic events by inducing transcriptional silencing of tumor suppressor genes (TSGs) in colorectal cancer (CRC) cells in a ZNF304-dependent manner. The polypeptide is GTPase KRas (KRAS) (Homo sapiens (Human)).